A 274-amino-acid chain; its full sequence is Large ribosomal subunit protein uL2 (274 aa).

Residues 223-274 (VAMNPVDHPHGGGEGRTSGGRHPVTPWGVPTKGYKTRSNKRTDKYIVRRRNK) are disordered.

It belongs to the universal ribosomal protein uL2 family. Part of the 50S ribosomal subunit. Forms a bridge to the 30S subunit in the 70S ribosome.

Its function is as follows. One of the primary rRNA binding proteins. Required for association of the 30S and 50S subunits to form the 70S ribosome, for tRNA binding and peptide bond formation. It has been suggested to have peptidyltransferase activity; this is somewhat controversial. Makes several contacts with the 16S rRNA in the 70S ribosome. In Shewanella baltica (strain OS223), this protein is Large ribosomal subunit protein uL2.